A 542-amino-acid polypeptide reads, in one-letter code: POTE ankyrin domain family member C (542 aa).

ANK repeat units follow at residues 138 to 171, 172 to 201, 205 to 234, 238 to 267, 271 to 300, 304 to 333, and 337 to 373; these read EDLD…KRDK, QKRT…QLNV, KKRT…DQNI, YGNT…DIES, CGLT…NLNA, YGRT…DVSS, and SGQT…SENS. The segment at 369-494 is disordered; it reads SSENSNPEQD…NTGISQDEIL (126 aa). Basic and acidic residues-rich tracts occupy residues 377–392, 401–412, and 466–481; these read QDLK…RLKV, MSQEPEINKDCD, and EEYH…KQLS. The segment covering 482–494 has biased composition (polar residues); that stretch reads EEQNTGISQDEIL. Residues 489–538 adopt a coiled-coil conformation; sequence SQDEILTNKQKQIEVAEKKMNSELSLSHKKEEDLLRENSMLQEEIAMLIS.

The protein belongs to the POTE family. In terms of tissue distribution, expressed in prostate and testis.

The polypeptide is POTE ankyrin domain family member C (POTEC) (Homo sapiens (Human)).